We begin with the raw amino-acid sequence, 169 residues long: DNA damage-inducible transcript 3 protein (169 aa).

The interaction with TRIB3 stretch occupies residues 10-18 (FGTLSSWEL). Residues 10 to 26 (FGTLSSWELEAWYEDLQ) are N-terminal. Phosphoserine; by CK2 is present on residues S14, S15, S30, and S31. Positions 32-139 (DENGGTYVSP…KVAQLAEENE (108 aa)) are disordered. The span at 74 to 89 (TSTSQSPHSPDSSQSS) shows a compositional bias: low complexity. Phosphoserine; by MAPK14 is present on residues S79 and S82. One can recognise a bZIP domain in the interval 99-162 (QGRTRKRKQS…EATRRALIDR (64 aa)). The segment at 101 to 130 (RTRKRKQSGHSPARAGKQRMKEKEQENERK) is basic motif. Residues 119–139 (RMKEKEQENERKVAQLAEENE) are compositionally biased toward basic and acidic residues. The leucine-zipper stretch occupies residues 134–148 (LAEENERLKQEIERL).

The protein belongs to the bZIP family. As to quaternary structure, heterodimer. Interacts with TCF7L2/TCF4, EP300/P300, HDAC1, HDAC5 and HDAC6. Interacts with TRIB3 which blocks its association with EP300/P300. Interacts with FOXO3, CEBPB and ATF4. Interacts with isoform AltDDIT3 of DDIT3. Ubiquitinated, leading to its degradation by the proteasome. Post-translationally, phosphorylation at serine residues by MAPK14 enhances its transcriptional activation activity while phosphorylation at serine residues by CK2 inhibits its transcriptional activation activity.

The protein localises to the cytoplasm. It is found in the nucleus. Functionally, multifunctional transcription factor in endoplasmic reticulum (ER) stress response. Plays an essential role in the response to a wide variety of cell stresses and induces cell cycle arrest and apoptosis in response to ER stress. Plays a dual role both as an inhibitor of CCAAT/enhancer-binding protein (C/EBP) function and as an activator of other genes. Acts as a dominant-negative regulator of C/EBP-induced transcription: dimerizes with members of the C/EBP family, impairs their association with C/EBP binding sites in the promoter regions, and inhibits the expression of C/EBP regulated genes. Positively regulates the transcription of TRIB3, IL6, IL8, IL23, TNFRSF10B/DR5, PPP1R15A/GADD34, BBC3/PUMA, BCL2L11/BIM and ERO1L. Negatively regulates; expression of BCL2 and MYOD1, ATF4-dependent transcriptional activation of asparagine synthetase (ASNS), CEBPA-dependent transcriptional activation of hepcidin (HAMP) and CEBPB-mediated expression of peroxisome proliferator-activated receptor gamma (PPARG). Together with ATF4, mediates ER-mediated cell death by promoting expression of genes involved in cellular amino acid metabolic processes, mRNA translation and the unfolded protein response (UPR) in response to ER stress. Inhibits the canonical Wnt signaling pathway by binding to TCF7L2/TCF4, impairing its DNA-binding properties and repressing its transcriptional activity. Plays a regulatory role in the inflammatory response through the induction of caspase-11 (CASP4/CASP11) which induces the activation of caspase-1 (CASP1) and both these caspases increase the activation of pro-IL1B to mature IL1B which is involved in the inflammatory response. Acts as a major regulator of postnatal neovascularization through regulation of endothelial nitric oxide synthase (NOS3)-related signaling. In Homo sapiens (Human), this protein is DNA damage-inducible transcript 3 protein (DDIT3).